We begin with the raw amino-acid sequence, 267 residues long: Hydroxyacylglutathione hydrolase (267 aa).

7 residues coordinate Zn(2+): His55, His57, Asp59, His60, His121, Asp138, and His176.

This sequence belongs to the metallo-beta-lactamase superfamily. Glyoxalase II family. As to quaternary structure, monomer. Requires Zn(2+) as cofactor.

The catalysed reaction is an S-(2-hydroxyacyl)glutathione + H2O = a 2-hydroxy carboxylate + glutathione + H(+). It participates in secondary metabolite metabolism; methylglyoxal degradation; (R)-lactate from methylglyoxal: step 2/2. Thiolesterase that catalyzes the hydrolysis of S-D-lactoyl-glutathione to form glutathione and D-lactic acid. This chain is Hydroxyacylglutathione hydrolase, found in Shewanella oneidensis (strain ATCC 700550 / JCM 31522 / CIP 106686 / LMG 19005 / NCIMB 14063 / MR-1).